The chain runs to 272 residues: 3-methyl-2-oxobutanoate hydroxymethyltransferase (272 aa).

Mg(2+) is bound by residues Asp43 and Asp82. 3-methyl-2-oxobutanoate is bound by residues 43–44 (DS), Asp82, and Lys112. Position 114 (Glu114) interacts with Mg(2+). The active-site Proton acceptor is the Glu179.

It belongs to the PanB family. In terms of assembly, homodecamer; pentamer of dimers. The cofactor is Mg(2+).

The protein localises to the cytoplasm. The catalysed reaction is 3-methyl-2-oxobutanoate + (6R)-5,10-methylene-5,6,7,8-tetrahydrofolate + H2O = 2-dehydropantoate + (6S)-5,6,7,8-tetrahydrofolate. It participates in cofactor biosynthesis; (R)-pantothenate biosynthesis; (R)-pantoate from 3-methyl-2-oxobutanoate: step 1/2. Its function is as follows. Catalyzes the reversible reaction in which hydroxymethyl group from 5,10-methylenetetrahydrofolate is transferred onto alpha-ketoisovalerate to form ketopantoate. This is 3-methyl-2-oxobutanoate hydroxymethyltransferase from Staphylococcus aureus (strain bovine RF122 / ET3-1).